Reading from the N-terminus, the 500-residue chain is MPDAVKVGFVLFATPARGTLIVFCDDGLKFGATATKALGAAVATVKRAAATAQFKGKSGSALDLLAPEGLKVGRLIVVGAGKAASINDYDLLKLGGAVAGKIGAGDTAVTVVADLPTGAMKPEQAAAIASGIRLRAYKFDRYKTKKKDDENGAANASVTLAVADPAAAKKAFTPDSHVVDGVILARELVNEPPNVLYPEEFAKRAAQLKKLGVEVQILDVKAMTQLKMGALLGVSQGSAHPGRTVIMRWNGGKKGEQPLAFVGKGVCFDTGGISIKPSASMEDMKGDMGGAACVVGLMHALAARKAKVNAVGAIGLVENMPDGNAQRPGDIVTSMSGQTIEIINTDAEGRLVLADVLWYVAQKHKPKFMVDLATLTGAIMVALGTEYAGLFSNNDQLAERLAAVGQSTGEKVWRMPLGPEYDKQIDSQFADMKNTGSRNGGSITAAQFLQRFVDGTPWAHLDIAGTAMASPKNEINQSWGSGYGVRLLNQLVAEYYEAKK.

2 residues coordinate Mn(2+): lysine 264 and aspartate 269. The active site involves lysine 276. Mn(2+) is bound by residues aspartate 287, aspartate 346, and glutamate 348. The active site involves arginine 350.

Belongs to the peptidase M17 family. Requires Mn(2+) as cofactor.

Its subcellular location is the cytoplasm. It catalyses the reaction Release of an N-terminal amino acid, Xaa-|-Yaa-, in which Xaa is preferably Leu, but may be other amino acids including Pro although not Arg or Lys, and Yaa may be Pro. Amino acid amides and methyl esters are also readily hydrolyzed, but rates on arylamides are exceedingly low.. The enzyme catalyses Release of an N-terminal amino acid, preferentially leucine, but not glutamic or aspartic acids.. Functionally, presumably involved in the processing and regular turnover of intracellular proteins. Catalyzes the removal of unsubstituted N-terminal amino acids from various peptides. This Rhodopseudomonas palustris (strain ATCC BAA-98 / CGA009) protein is Probable cytosol aminopeptidase.